We begin with the raw amino-acid sequence, 509 residues long: Cytochrome P450 monooxygenase LUC2 (509 aa).

Residues 30-50 (TKVLVTFLTIVIIAPRVFTVI) traverse the membrane as a helical segment. Heme is bound at residue Cys-456.

The protein belongs to the cytochrome P450 family. Heme is required as a cofactor.

It localises to the membrane. It functions in the pathway mycotoxin biosynthesis. In terms of biological role, cytochrome P450 monooxygenase; part of the gene cluster that mediates the biosynthesis of the mycotoxin lucilactaene and the lucilactaene-related compound NG-391 that act as cell cycle inhibitors with potent growth inhibitory activity against malarial parasites, moderate growth inhibitory activity against cancer cells, and no activity against bacteria and fungi. Within the pathway, LUC2 performs C-20 methyl group hydroxylation of several intermediates. LUC2 does not perform the full oxidation of the C-20 methyl group into carboxylic acid, which is a prerequisite for the final methylation step. The pathway begins with the hybrid PKS-NRPS synthetase LUC5 which is responsible for the condensation of one acetyl-coenzyme A (CoA) unit with six malonyl-CoA units and the amide linkage of the arising heptaketide and homoserine, subsequently releasing the first intermediate prelucilactaene B. Both the cytochrome P450 monooxygenase LUC2 and the hydrolase LUC6 function in parallel in modification of prelucilactaene B. LUC6 may catalyze the 2-pyrrolidone ring formation to form prelucilactaene C from prelucilactaene B, followed by C-15 hydroxylation by the same enzyme to give prelucilactaene D, which is then converted to prelucilactaene E by epoxidation, and finally to prelucilactaene F by cyclization. Prelucilactane D, prelucilactaene E, and prelucilactaene F can be converted to dihydrolucilactaene, NG391, and lucilactaene, respectively, via C-20 methyl group hydroxylation by the cytochrome P450 monooxygenase LUC2. However, LUC2, unlike FUS8 in fusarin C biosynthesis, is not enough for the full oxidation of the C-20 methyl group into carboxylic acid, which is a prerequisite for the final methylation step. The aldehyde dehydrogenase LUC3 is involved in the biosynthesis by further oxidation of the C-20 alcoholic analog prelucilactaene G into a carboxylic derivative. This unidentified carboxylic derivative may be converted to demethyllucilactaene. As the last step, the methyltransferase LUC1 methylates the hydroxyl group at C-21 of demethyllucilactaene to generate lucilactaene. The chain is Cytochrome P450 monooxygenase LUC2 from Fusarium sp.